A 251-amino-acid polypeptide reads, in one-letter code: 3-deoxy-manno-octulosonate cytidylyltransferase (251 aa).

This sequence belongs to the KdsB family.

Its subcellular location is the cytoplasm. The enzyme catalyses 3-deoxy-alpha-D-manno-oct-2-ulosonate + CTP = CMP-3-deoxy-beta-D-manno-octulosonate + diphosphate. It functions in the pathway nucleotide-sugar biosynthesis; CMP-3-deoxy-D-manno-octulosonate biosynthesis; CMP-3-deoxy-D-manno-octulosonate from 3-deoxy-D-manno-octulosonate and CTP: step 1/1. Its pathway is bacterial outer membrane biogenesis; lipopolysaccharide biosynthesis. Its function is as follows. Activates KDO (a required 8-carbon sugar) for incorporation into bacterial lipopolysaccharide in Gram-negative bacteria. The protein is 3-deoxy-manno-octulosonate cytidylyltransferase of Rhizobium etli (strain ATCC 51251 / DSM 11541 / JCM 21823 / NBRC 15573 / CFN 42).